The primary structure comprises 563 residues: Arginine--tRNA ligase (563 aa).

The short motif at 120 to 130 (PNIAKPFHVGH) is the 'HIGH' region element.

It belongs to the class-I aminoacyl-tRNA synthetase family. In terms of assembly, monomer.

Its subcellular location is the cytoplasm. The enzyme catalyses tRNA(Arg) + L-arginine + ATP = L-arginyl-tRNA(Arg) + AMP + diphosphate. This is Arginine--tRNA ligase from Clostridium beijerinckii (strain ATCC 51743 / NCIMB 8052) (Clostridium acetobutylicum).